The following is a 752-amino-acid chain: GTPase-activating protein rrc-1 (752 aa).

The 80-residue stretch at 165 to 244 (PAIAAAVVTK…PRDCVMLIDD (80 aa)) folds into the SH3 domain. The Rho-GAP domain occupies 281–463 (LELTELFMRT…FCIENSDSLF (183 aa)). Disordered regions lie at residues 523–552 (STGELCGSPPSEVKWRSRSTRSHSTDATFQ) and 582–609 (RSMRPTSRPPPSPRTRRARFSNGGGANN).

Its function is as follows. Functions as a GTPase-activating protein (GAP) for ced-10/RAC-1 and CDC42. In Caenorhabditis briggsae, this protein is GTPase-activating protein rrc-1.